Consider the following 159-residue polypeptide: NAD(P)H-quinone oxidoreductase subunit I, chloroplastic (159 aa).

4Fe-4S ferredoxin-type domains follow at residues 55–84 and 95–124; these read GRIH…VDWN and KNYS…MTEE. 8 residues coordinate [4Fe-4S] cluster: cysteine 64, cysteine 67, cysteine 70, cysteine 74, cysteine 104, cysteine 107, cysteine 110, and cysteine 114.

This sequence belongs to the complex I 23 kDa subunit family. NDH is composed of at least 16 different subunits, 5 of which are encoded in the nucleus. The cofactor is [4Fe-4S] cluster.

The protein resides in the plastid. The protein localises to the chloroplast thylakoid membrane. It catalyses the reaction a plastoquinone + NADH + (n+1) H(+)(in) = a plastoquinol + NAD(+) + n H(+)(out). The catalysed reaction is a plastoquinone + NADPH + (n+1) H(+)(in) = a plastoquinol + NADP(+) + n H(+)(out). NDH shuttles electrons from NAD(P)H:plastoquinone, via FMN and iron-sulfur (Fe-S) centers, to quinones in the photosynthetic chain and possibly in a chloroplast respiratory chain. The immediate electron acceptor for the enzyme in this species is believed to be plastoquinone. Couples the redox reaction to proton translocation, and thus conserves the redox energy in a proton gradient. The polypeptide is NAD(P)H-quinone oxidoreductase subunit I, chloroplastic (Chara vulgaris (Common stonewort)).